Reading from the N-terminus, the 552-residue chain is ATP synthase subunit alpha (552 aa).

173–180 (GDRQTGKS) is a binding site for ATP. The segment at 509-552 (KPQFSGGSKGSNVPKDVDAGATDADDISQEKITTRKGGATAARG) is disordered.

It belongs to the ATPase alpha/beta chains family. In terms of assembly, F-type ATPases have 2 components, CF(1) - the catalytic core - and CF(0) - the membrane proton channel. CF(1) has five subunits: alpha(3), beta(3), gamma(1), delta(1), epsilon(1). CF(0) has three main subunits: a(1), b(2) and c(9-12). The alpha and beta chains form an alternating ring which encloses part of the gamma chain. CF(1) is attached to CF(0) by a central stalk formed by the gamma and epsilon chains, while a peripheral stalk is formed by the delta and b chains.

The protein localises to the cell membrane. The enzyme catalyses ATP + H2O + 4 H(+)(in) = ADP + phosphate + 5 H(+)(out). Its function is as follows. Produces ATP from ADP in the presence of a proton gradient across the membrane. The alpha chain is a regulatory subunit. This is ATP synthase subunit alpha from Kineococcus radiotolerans (strain ATCC BAA-149 / DSM 14245 / SRS30216).